The sequence spans 345 residues: Ferrochelatase (345 aa).

Fe cation is bound by residues histidine 199 and glutamate 302.

It belongs to the ferrochelatase family.

It is found in the cytoplasm. The catalysed reaction is heme b + 2 H(+) = protoporphyrin IX + Fe(2+). It functions in the pathway porphyrin-containing compound metabolism; protoheme biosynthesis; protoheme from protoporphyrin-IX: step 1/1. Its function is as follows. Catalyzes the ferrous insertion into protoporphyrin IX. The chain is Ferrochelatase from Porphyromonas gingivalis (strain ATCC 33277 / DSM 20709 / CIP 103683 / JCM 12257 / NCTC 11834 / 2561).